The chain runs to 207 residues: Large ribosomal subunit protein uL4 (207 aa).

Positions 50-75 are disordered; that stretch reads KTKTVSEVSGTTKKPFKQKGTGNARQ.

The protein belongs to the universal ribosomal protein uL4 family. Part of the 50S ribosomal subunit.

Functionally, one of the primary rRNA binding proteins, this protein initially binds near the 5'-end of the 23S rRNA. It is important during the early stages of 50S assembly. It makes multiple contacts with different domains of the 23S rRNA in the assembled 50S subunit and ribosome. In terms of biological role, forms part of the polypeptide exit tunnel. The protein is Large ribosomal subunit protein uL4 of Rickettsia felis (strain ATCC VR-1525 / URRWXCal2) (Rickettsia azadi).